The chain runs to 145 residues: ATP synthase epsilon chain (145 aa).

A compositionally biased stretch (basic and acidic residues) spans 93 to 104 (AEAEKARARAQE). Residues 93–113 (AEAEKARARAQEALKNPDASK) form a disordered region.

It belongs to the ATPase epsilon chain family. In terms of assembly, F-type ATPases have 2 components, CF(1) - the catalytic core - and CF(0) - the membrane proton channel. CF(1) has five subunits: alpha(3), beta(3), gamma(1), delta(1), epsilon(1). CF(0) has three main subunits: a, b and c.

It is found in the cell inner membrane. In terms of biological role, produces ATP from ADP in the presence of a proton gradient across the membrane. This chain is ATP synthase epsilon chain, found in Francisella philomiragia subsp. philomiragia (strain ATCC 25017 / CCUG 19701 / FSC 153 / O#319-036).